A 226-amino-acid chain; its full sequence is Probable proteasome subunit beta type-1 (226 aa).

Residues 1-24 (MATTVKDTMNVDINAIKKGEIRMG) constitute a propeptide, removed in mature form. Thr25 (nucleophile) is an active-site residue.

It belongs to the peptidase T1B family. As to quaternary structure, the 26S proteasome consists of a 20S proteasome core and two 19S regulatory subunits. The 20S proteasome core is composed of 28 subunits that are arranged in four stacked rings, resulting in a barrel-shaped structure. The two end rings are each formed by seven alpha subunits, and the two central rings are each formed by seven beta subunits. The catalytic chamber with the active sites is on the inside of the barrel.

The protein resides in the cytoplasm. Its subcellular location is the nucleus. It carries out the reaction Cleavage of peptide bonds with very broad specificity.. Functionally, the proteasome is a multicatalytic proteinase complex which is characterized by its ability to cleave peptides with Arg, Phe, Tyr, Leu, and Glu adjacent to the leaving group at neutral or slightly basic pH. The proteasome has an ATP-dependent proteolytic activity. The sequence is that of Probable proteasome subunit beta type-1 (pre3) from Schizosaccharomyces pombe (strain 972 / ATCC 24843) (Fission yeast).